A 213-amino-acid polypeptide reads, in one-letter code: MAKAVMMLPVLLSFLLLPFSSMALTQDFCVADLTCSDTPAGYPCKASVGAGDFAYHGLAAAGNTSNLIKAAVTPAFVGQFPGVNGLGISAARLDIAVGGVVPLHTHPAASELLFVTQGTVAAGFITSSSNTVYTRTLYAGDIMVFPQGLLHYQYNAGQSAAVALVAFSGPNPGLQITDYALFANNLPSAIVEKVTFLDDAQVKKLKSVLGGSG.

The signal sequence occupies residues 1 to 23 (MAKAVMMLPVLLSFLLLPFSSMA). Cys29 and Cys44 form a disulfide bridge. A Cupin type-1 domain is found at 56-203 (HGLAAAGNTS…VTFLDDAQVK (148 aa)). The N-linked (GlcNAc...) asparagine glycan is linked to Asn63. Mn(2+) is bound by residues His104, His106, Glu111, and His151.

It belongs to the germin family. Oligomer (believed to be a pentamer but probably hexamer). In terms of processing, phosphorylated on threonine residue.

The protein resides in the secreted. Its subcellular location is the extracellular space. The protein localises to the apoplast. In terms of biological role, may play a role in plant defense. Probably has no oxalate oxidase activity even if the active site is conserved. The chain is Germin-like protein 8-14 (GER5) from Oryza sativa subsp. japonica (Rice).